Here is a 184-residue protein sequence, read N- to C-terminus: Ribosome-recycling factor (184 aa).

Belongs to the RRF family.

It localises to the cytoplasm. Its function is as follows. Responsible for the release of ribosomes from messenger RNA at the termination of protein biosynthesis. May increase the efficiency of translation by recycling ribosomes from one round of translation to another. This chain is Ribosome-recycling factor, found in Clostridium botulinum (strain ATCC 19397 / Type A).